We begin with the raw amino-acid sequence, 337 residues long: Phosphate acyltransferase (337 aa).

It belongs to the PlsX family. In terms of assembly, homodimer. Probably interacts with PlsY.

The protein resides in the cytoplasm. The catalysed reaction is a fatty acyl-[ACP] + phosphate = an acyl phosphate + holo-[ACP]. It participates in lipid metabolism; phospholipid metabolism. Catalyzes the reversible formation of acyl-phosphate (acyl-PO(4)) from acyl-[acyl-carrier-protein] (acyl-ACP). This enzyme utilizes acyl-ACP as fatty acyl donor, but not acyl-CoA. The protein is Phosphate acyltransferase of Moritella marina (Vibrio marinus).